We begin with the raw amino-acid sequence, 211 residues long: NADH-quinone oxidoreductase subunit C (211 aa).

The protein belongs to the complex I 30 kDa subunit family. In terms of assembly, NDH-1 is composed of 14 different subunits. Subunits NuoB, C, D, E, F, and G constitute the peripheral sector of the complex.

Its subcellular location is the cell inner membrane. It carries out the reaction a quinone + NADH + 5 H(+)(in) = a quinol + NAD(+) + 4 H(+)(out). NDH-1 shuttles electrons from NADH, via FMN and iron-sulfur (Fe-S) centers, to quinones in the respiratory chain. The immediate electron acceptor for the enzyme in this species is believed to be ubiquinone. Couples the redox reaction to proton translocation (for every two electrons transferred, four hydrogen ions are translocated across the cytoplasmic membrane), and thus conserves the redox energy in a proton gradient. The chain is NADH-quinone oxidoreductase subunit C from Azorhizobium caulinodans (strain ATCC 43989 / DSM 5975 / JCM 20966 / LMG 6465 / NBRC 14845 / NCIMB 13405 / ORS 571).